The sequence spans 299 residues: Hemolysin C homolog (299 aa).

2 CBS domains span residues 80 to 142 and 145 to 202; these read MVPR…NGRL and LIRK…IDDE.

It belongs to the UPF0053 family. Hemolysin C subfamily.

The protein is Hemolysin C homolog (tlyC) of Rickettsia conorii (strain ATCC VR-613 / Malish 7).